A 470-amino-acid chain; its full sequence is Ribulose bisphosphate carboxylase large chain (470 aa).

2 residues coordinate substrate: asparagine 115 and threonine 165. The Proton acceptor role is filled by lysine 167. Lysine 169 is a substrate binding site. Mg(2+) contacts are provided by lysine 193, aspartate 195, and glutamate 196. The residue at position 193 (lysine 193) is an N6-carboxylysine. Histidine 286 acts as the Proton acceptor in catalysis. The substrate site is built by arginine 287, histidine 319, and serine 371.

This sequence belongs to the RuBisCO large chain family. Type I subfamily. Heterohexadecamer of 8 large chains and 8 small chains. The cofactor is Mg(2+).

It is found in the carboxysome. It catalyses the reaction 2 (2R)-3-phosphoglycerate + 2 H(+) = D-ribulose 1,5-bisphosphate + CO2 + H2O. It carries out the reaction D-ribulose 1,5-bisphosphate + O2 = 2-phosphoglycolate + (2R)-3-phosphoglycerate + 2 H(+). Its function is as follows. RuBisCO catalyzes two reactions: the carboxylation of D-ribulose 1,5-bisphosphate, the primary event in carbon dioxide fixation, as well as the oxidative fragmentation of the pentose substrate in the photorespiration process. Both reactions occur simultaneously and in competition at the same active site. The chain is Ribulose bisphosphate carboxylase large chain from Prochlorococcus marinus (strain SARG / CCMP1375 / SS120).